Consider the following 111-residue polypeptide: Large ribosomal subunit protein uL22 (111 aa).

It belongs to the universal ribosomal protein uL22 family. As to quaternary structure, part of the 50S ribosomal subunit.

Functionally, this protein binds specifically to 23S rRNA; its binding is stimulated by other ribosomal proteins, e.g. L4, L17, and L20. It is important during the early stages of 50S assembly. It makes multiple contacts with different domains of the 23S rRNA in the assembled 50S subunit and ribosome. The globular domain of the protein is located near the polypeptide exit tunnel on the outside of the subunit, while an extended beta-hairpin is found that lines the wall of the exit tunnel in the center of the 70S ribosome. This is Large ribosomal subunit protein uL22 from Alkalilimnicola ehrlichii (strain ATCC BAA-1101 / DSM 17681 / MLHE-1).